Reading from the N-terminus, the 192-residue chain is Leucine-rich repeat-containing protein 51 (192 aa).

LRR repeat units follow at residues 49–71, 80–101, and 103–124; these read SLTQ…NQVV, NLAW…LTTF, and NLSV…NKLA. One can recognise an LRRCT domain in the interval 137–175; that stretch reads NPIEEEKGYRQYVLCNLPRITTFDFSGVTKADRSTAEVW.

Its subcellular location is the cytoplasm. The protein is Leucine-rich repeat-containing protein 51 of Rattus norvegicus (Rat).